A 616-amino-acid polypeptide reads, in one-letter code: Protein cereblon (616 aa).

Disordered stretches follow at residues 1–39 (MDEE…DDSV), 63–137 (FGPS…AMPR), and 182–220 (SQER…DIDM). Residues 11 to 32 (AQEQEVAGSAGEAAAGPSGAEV) are compositionally biased toward low complexity. Residues 96–107 (SEEDIVLDDGTE) show a composition bias toward acidic residues. Residues 183–192 (QERRRSRNSD) are compositionally biased toward basic and acidic residues. The span at 194 to 203 (VSPEAEDDEL) shows a compositional bias: acidic residues. Over residues 206-215 (HPPPPPPRPP) the composition is skewed to pro residues. Positions 257-482 (HMLIFLHQYI…LIGGILKEET (226 aa)) constitute a Lon N-terminal domain. The CULT domain maps to 481 to 590 (ETLFYCRYCN…LAGSSVRIGK (110 aa)). The Zn(2+) site is built by Cys486, Cys489, Cys555, and Cys558.

It belongs to the CRBN family. Likely a component of a DCX (DDB1-CUL4-X-box) protein ligase complex. May interact with pic/DDB1. Ubiquitinated.

The protein localises to the nucleus. Its pathway is protein modification; protein ubiquitination. In terms of biological role, substrate recognition component of a DCX (DDB1-CUL4-X-box) E3 protein ligase complex that mediates the ubiquitination and subsequent proteasomal degradation of target proteins. Has an essential role in mediating growth by negatively regulating insulin signaling. It also has a role in maintaining presynaptic function in the neuromuscular junction synapses of third-instar larvae. This is Protein cereblon from Drosophila persimilis (Fruit fly).